A 271-amino-acid chain; its full sequence is Formamidopyrimidine-DNA glycosylase (271 aa).

Pro2 acts as the Schiff-base intermediate with DNA in catalysis. Catalysis depends on Glu3, which acts as the Proton donor. Lys58 (proton donor; for beta-elimination activity) is an active-site residue. DNA-binding residues include His92, Arg111, and Lys152. An FPG-type zinc finger spans residues 237–271; the sequence is YVYGKVQKPCKICNNIITLIRQNGRSTYFCNACQN. Arg261 (proton donor; for delta-elimination activity) is an active-site residue.

Belongs to the FPG family. In terms of assembly, monomer. Requires Zn(2+) as cofactor.

It catalyses the reaction Hydrolysis of DNA containing ring-opened 7-methylguanine residues, releasing 2,6-diamino-4-hydroxy-5-(N-methyl)formamidopyrimidine.. The catalysed reaction is 2'-deoxyribonucleotide-(2'-deoxyribose 5'-phosphate)-2'-deoxyribonucleotide-DNA = a 3'-end 2'-deoxyribonucleotide-(2,3-dehydro-2,3-deoxyribose 5'-phosphate)-DNA + a 5'-end 5'-phospho-2'-deoxyribonucleoside-DNA + H(+). Functionally, involved in base excision repair of DNA damaged by oxidation or by mutagenic agents. Acts as a DNA glycosylase that recognizes and removes damaged bases. Has a preference for oxidized purines, such as 7,8-dihydro-8-oxoguanine (8-oxoG). Has AP (apurinic/apyrimidinic) lyase activity and introduces nicks in the DNA strand. Cleaves the DNA backbone by beta-delta elimination to generate a single-strand break at the site of the removed base with both 3'- and 5'-phosphates. This Wolbachia sp. subsp. Drosophila simulans (strain wRi) protein is Formamidopyrimidine-DNA glycosylase.